The sequence spans 126 residues: Large ribosomal subunit protein bL12 (126 aa).

Residues 36–55 (APAPAAAPAAGGDQGGAEAA) show a composition bias toward low complexity. The segment at 36–57 (APAPAAAPAAGGDQGGAEAAEQ) is disordered.

Belongs to the bacterial ribosomal protein bL12 family. As to quaternary structure, homodimer. Part of the ribosomal stalk of the 50S ribosomal subunit. Forms a multimeric L10(L12)X complex, where L10 forms an elongated spine to which 2 to 4 L12 dimers bind in a sequential fashion. Binds GTP-bound translation factors.

In terms of biological role, forms part of the ribosomal stalk which helps the ribosome interact with GTP-bound translation factors. Is thus essential for accurate translation. This is Large ribosomal subunit protein bL12 from Natranaerobius thermophilus (strain ATCC BAA-1301 / DSM 18059 / JW/NM-WN-LF).